The chain runs to 269 residues: Chymotrypsin-like elastase family member 2A (269 aa).

An N-terminal signal peptide occupies residues 1-16 (MIRALLLSTLVAGALS). Residues 17 to 28 (CGLPANLPQLPR) constitute a propeptide, activation peptide. Residues 29 to 267 (VVGGEDARPN…YIDWINSVIA (239 aa)) enclose the Peptidase S1 domain. The cysteines at positions 58 and 74 are disulfide-linked. Active-site charge relay system residues include histidine 73 and aspartate 121. 3 disulfides stabilise this stretch: cysteine 155–cysteine 222, cysteine 186–cysteine 202, and cysteine 212–cysteine 243. The active-site Charge relay system is the serine 216.

It belongs to the peptidase S1 family. Elastase subfamily. As to quaternary structure, interacts with CPA1. Interacts with SERPINA1. As to expression, pancreas.

The protein resides in the secreted. It catalyses the reaction Preferential cleavage: Leu-|-Xaa, Met-|-Xaa and Phe-|-Xaa. Hydrolyzes elastin.. Its function is as follows. Elastase that enhances insulin signaling and might have a physiologic role in cellular glucose metabolism. Circulates in plasma and reduces platelet hyperactivation, triggers both insulin secretion and degradation, and increases insulin sensitivity. This Sus scrofa (Pig) protein is Chymotrypsin-like elastase family member 2A (CELA2A).